A 122-amino-acid polypeptide reads, in one-letter code: Cytochrome c3 hydrogenase large chain (122 aa).

Fe cation is required as a cofactor.

It catalyses the reaction 2 Fe(III)-[cytochrome c3] + H2 = 2 Fe(II)-[cytochrome c3] + 2 H(+). This chain is Cytochrome c3 hydrogenase large chain (hoxG), found in Acidithiobacillus ferrooxidans (Thiobacillus ferrooxidans).